The sequence spans 251 residues: Phosphate import ATP-binding protein PstB 2 (251 aa).

Residues 5 to 246 (ITSKDVHLSY…PKKQITSDYL (242 aa)) form the ABC transporter domain. 37–44 (GPSGCGKS) provides a ligand contact to ATP.

It belongs to the ABC transporter superfamily. Phosphate importer (TC 3.A.1.7) family. As to quaternary structure, the complex is composed of two ATP-binding proteins (PstB), two transmembrane proteins (PstC and PstA) and a solute-binding protein (PstS).

Its subcellular location is the cell membrane. It carries out the reaction phosphate(out) + ATP + H2O = ADP + 2 phosphate(in) + H(+). Its function is as follows. Part of the ABC transporter complex PstSACB involved in phosphate import. Responsible for energy coupling to the transport system. The sequence is that of Phosphate import ATP-binding protein PstB 2 from Lactobacillus johnsonii (strain CNCM I-12250 / La1 / NCC 533).